Here is a 276-residue protein sequence, read N- to C-terminus: Pantothenate synthetase (276 aa).

26–33 contributes to the ATP binding site; the sequence is MGFLHAGH. The active-site Proton donor is the histidine 33. Glutamine 57 lines the (R)-pantoate pocket. Glutamine 57 contributes to the beta-alanine binding site. 143–146 lines the ATP pocket; the sequence is GQKD. (R)-pantoate is bound at residue glutamine 149. Residues isoleucine 172 and 180-183 each bind ATP; that span reads MSSR.

It belongs to the pantothenate synthetase family. As to quaternary structure, homodimer.

The protein localises to the cytoplasm. It carries out the reaction (R)-pantoate + beta-alanine + ATP = (R)-pantothenate + AMP + diphosphate + H(+). It functions in the pathway cofactor biosynthesis; (R)-pantothenate biosynthesis; (R)-pantothenate from (R)-pantoate and beta-alanine: step 1/1. In terms of biological role, catalyzes the condensation of pantoate with beta-alanine in an ATP-dependent reaction via a pantoyl-adenylate intermediate. This is Pantothenate synthetase from Herpetosiphon aurantiacus (strain ATCC 23779 / DSM 785 / 114-95).